The chain runs to 364 residues: Peptide chain release factor 2 (364 aa).

Residue Gln251 is modified to N5-methylglutamine.

Belongs to the prokaryotic/mitochondrial release factor family. Post-translationally, methylated by PrmC. Methylation increases the termination efficiency of RF2.

Its subcellular location is the cytoplasm. In terms of biological role, peptide chain release factor 2 directs the termination of translation in response to the peptide chain termination codons UGA and UAA. The sequence is that of Peptide chain release factor 2 from Sulfurovum sp. (strain NBC37-1).